The primary structure comprises 613 residues: Glutamyl-tRNA(Gln) amidotransferase subunit E (613 aa).

Belongs to the GatB/GatE family. GatE subfamily. Heterodimer of GatD and GatE.

It catalyses the reaction L-glutamyl-tRNA(Gln) + L-glutamine + ATP + H2O = L-glutaminyl-tRNA(Gln) + L-glutamate + ADP + phosphate + H(+). In terms of biological role, allows the formation of correctly charged Gln-tRNA(Gln) through the transamidation of misacylated Glu-tRNA(Gln) in organisms which lack glutaminyl-tRNA synthetase. The reaction takes place in the presence of glutamine and ATP through an activated gamma-phospho-Glu-tRNA(Gln). The GatDE system is specific for glutamate and does not act on aspartate. The chain is Glutamyl-tRNA(Gln) amidotransferase subunit E from Archaeoglobus fulgidus (strain ATCC 49558 / DSM 4304 / JCM 9628 / NBRC 100126 / VC-16).